Here is a 572-residue protein sequence, read N- to C-terminus: Protein 5NUC (572 aa).

The N-terminal stretch at 1–25 is a signal peptide; it reads MLFFLNFFVLVFSIELALLTASAAA. Zn(2+) contacts are provided by Asp-39 and His-41. The cysteines at positions 54 and 64 are disulfide-linked. Asn-82 carries N-linked (GlcNAc...) asparagine glycosylation. 4 residues coordinate Zn(2+): Asp-93, Asn-125, His-227, and His-250. Cys-360 and Cys-365 are joined by a disulfide. Residues Arg-361, Gln-399, Arg-404, and Phe-427 each coordinate substrate. Residues Asn-454 and Asn-490 are each glycosylated (N-linked (GlcNAc...) asparagine). Cys-488 and Cys-491 are joined by a disulfide. 512 to 518 lines the substrate pocket; that stretch reads FMKDGGD.

Belongs to the 5'-nucleotidase family. It depends on Zn(2+) as a cofactor.

The catalysed reaction is UDP-sugar + H2O = UMP + alpha-D-aldose 1-phosphate.. The enzyme catalyses a ribonucleoside 5'-phosphate + H2O = a ribonucleoside + phosphate. In terms of biological role, degradation of external UDP-glucose to uridine monophosphate and glucose-1-phosphate, which can then be used by the cell. This Lutzomyia longipalpis (Sand fly) protein is Protein 5NUC (5NUC).